We begin with the raw amino-acid sequence, 418 residues long: L-methionine/branched-chain amino acid exporter YjeH (418 aa).

Topologically, residues 1 to 15 are periplasmic; that stretch reads MSGLKQELGLAQGIG. Residues 16 to 36 traverse the membrane as a helical segment; the sequence is LLSTSLLGTGVFAVPALAALV. The Cytoplasmic segment spans residues 37 to 41; the sequence is AGNNS. Residues 42 to 62 traverse the membrane as a helical segment; the sequence is LWAWPVLIILVFPIAIVFAIL. Over 63–89 the chain is Periplasmic; sequence GRHYPSAGGVAHFVGMAFGSRLERVTG. A helical transmembrane segment spans residues 90-110; sequence WLFLSVIPVGLPAALQIAAGF. Residues 111 to 113 are Cytoplasmic-facing; the sequence is GQA. A helical membrane pass occupies residues 114-134; the sequence is MFGWHSWQLLLAELGTLALVW. Over 135–147 the chain is Periplasmic; sequence YIGTRGASSSANL. Residues 148–168 form a helical membrane-spanning segment; it reads QTVIAGLIVALIVAIWWAGDI. Topologically, residues 169 to 182 are cytoplasmic; that stretch reads KPANIPFPAPGNIE. Residues 183–203 traverse the membrane as a helical segment; it reads LTGLFAALSVMFWCFVGLEAF. Topologically, residues 204-219 are periplasmic; that stretch reads AHLASEFKNPERDFPR. Residues 220 to 240 form a helical membrane-spanning segment; that stretch reads ALMIGLLLAGLVYWGCTVVVL. Over 241 to 257 the chain is Cytoplasmic; it reads HFDAYGEKMAAAASLPK. The helical transmembrane segment at 258-278 threads the bilayer; that stretch reads IVVQLFGVGALWIACVIGYLA. At 279–317 the chain is on the periplasmic side; the sequence is CFASLNIYIQSFARLVWSQAQHNPDHYLARLSSRHIPNN. A helical transmembrane segment spans residues 318 to 338; sequence ALNAVLGCCVVSTLVIHALEI. The Cytoplasmic portion of the chain corresponds to 339-341; sequence NLD. Residues 342–362 form a helical membrane-spanning segment; the sequence is ALIIYANGIFIMIYLLCMLAG. Over 363-378 the chain is Periplasmic; the sequence is CKLLQGRYRLLAVVGG. The chain crosses the membrane as a helical span at residues 379–399; the sequence is LLCVLLLAMVGWKSLYALIML. Topologically, residues 400-418 are cytoplasmic; it reads AGLWLLLPKRKTPENGITT.

Belongs to the amino acid-polyamine-organocation (APC) superfamily. Amino acid efflux (AAE) (TC 2.A.3.13) family.

Its subcellular location is the cell inner membrane. The enzyme catalyses L-methionine(in) + H(+)(out) = L-methionine(out) + H(+)(in). It carries out the reaction L-leucine(in) + H(+)(out) = L-leucine(out) + H(+)(in). The catalysed reaction is L-isoleucine(in) + H(+)(out) = L-isoleucine(out) + H(+)(in). It catalyses the reaction L-valine(in) + H(+)(out) = L-valine(out) + H(+)(in). With respect to regulation, efflux of L-methionine is inhibited by the proton ionophore carbonyl cyanide m-chlorophenylhydrazone (CCCP). Functionally, catalyzes the efflux of L-methionine, L-leucine, L-isoleucine and L-valine. Activity is dependent on electrochemical potential. In Escherichia coli (strain K12), this protein is L-methionine/branched-chain amino acid exporter YjeH (yjeH).